The primary structure comprises 470 residues: MDYLPIFVELKGRLVLLVGGGEVAARKATLLLRAGALLQVVAPELCSELQQRYQAGELEWYQGEFQPEYLDGIFLVIAATDDRILNHQVFSEADKRSILVNVVDDQVHCSFIFPSIIDRSPVLVAISSAGKAPVLARLIREKLEALLPSSLGTMAKIAGKWRERVKQRLTSMRQRRSFWEQAFNGRFAMLVANGQIQQAEKQLEQQLEQSDLQGELALVGAGPGDPGLLTLKGLQVIQQADVVLYDHLVSSDVLDLIRRDADKICVGKRAGNHSVSQEETNRLIVKFARQGKKVVRLKGGDPFIFGRGGEELQVAASAGIPFQVVPGITAAIGATAYAGIPLTHREHSQSITFITGHCREKGNELDWPALARGHQTLVIYMGTVKAALISHQLILHGRAEDTPVAVIGCGTRLEQQVLTGTLLELEQLAQQAPSPALLVVGEVAQLHHQIAWFGQQSIAKISRPAVVDFA.

Positions 1 to 203 (MDYLPIFVEL…GQIQQAEKQL (203 aa)) are precorrin-2 dehydrogenase /sirohydrochlorin ferrochelatase. NAD(+) is bound by residues 22–23 (EV) and 43–44 (PE). Ser-128 carries the post-translational modification Phosphoserine. Residues 214–470 (GELALVGAGP…ISRPAVVDFA (257 aa)) form a uroporphyrinogen-III C-methyltransferase region. S-adenosyl-L-methionine is bound at residue Pro-223. Asp-246 (proton acceptor) is an active-site residue. Residue Lys-268 is the Proton donor of the active site. S-adenosyl-L-methionine contacts are provided by residues 299 to 301 (GGD), Ile-304, 329 to 330 (TA), Met-381, and Gly-410.

It in the N-terminal section; belongs to the precorrin-2 dehydrogenase / sirohydrochlorin ferrochelatase family. This sequence in the C-terminal section; belongs to the precorrin methyltransferase family.

It catalyses the reaction uroporphyrinogen III + 2 S-adenosyl-L-methionine = precorrin-2 + 2 S-adenosyl-L-homocysteine + H(+). The enzyme catalyses precorrin-2 + NAD(+) = sirohydrochlorin + NADH + 2 H(+). The catalysed reaction is siroheme + 2 H(+) = sirohydrochlorin + Fe(2+). It participates in cofactor biosynthesis; adenosylcobalamin biosynthesis; precorrin-2 from uroporphyrinogen III: step 1/1. The protein operates within cofactor biosynthesis; adenosylcobalamin biosynthesis; sirohydrochlorin from precorrin-2: step 1/1. Its pathway is porphyrin-containing compound metabolism; siroheme biosynthesis; precorrin-2 from uroporphyrinogen III: step 1/1. It functions in the pathway porphyrin-containing compound metabolism; siroheme biosynthesis; siroheme from sirohydrochlorin: step 1/1. It participates in porphyrin-containing compound metabolism; siroheme biosynthesis; sirohydrochlorin from precorrin-2: step 1/1. Functionally, multifunctional enzyme that catalyzes the SAM-dependent methylations of uroporphyrinogen III at position C-2 and C-7 to form precorrin-2 via precorrin-1. Then it catalyzes the NAD-dependent ring dehydrogenation of precorrin-2 to yield sirohydrochlorin. Finally, it catalyzes the ferrochelation of sirohydrochlorin to yield siroheme. The chain is Siroheme synthase from Photorhabdus laumondii subsp. laumondii (strain DSM 15139 / CIP 105565 / TT01) (Photorhabdus luminescens subsp. laumondii).